Reading from the N-terminus, the 207-residue chain is LexA repressor (207 aa).

The H-T-H motif DNA-binding region spans 28 to 48 (VREIGEAVGLASSSTVHGHLA). Active-site for autocatalytic cleavage activity residues include serine 129 and lysine 167.

This sequence belongs to the peptidase S24 family. In terms of assembly, homodimer.

It catalyses the reaction Hydrolysis of Ala-|-Gly bond in repressor LexA.. Represses a number of genes involved in the response to DNA damage (SOS response), including recA and lexA. In the presence of single-stranded DNA, RecA interacts with LexA causing an autocatalytic cleavage which disrupts the DNA-binding part of LexA, leading to derepression of the SOS regulon and eventually DNA repair. The sequence is that of LexA repressor from Brevibacillus brevis (strain 47 / JCM 6285 / NBRC 100599).